The following is a 614-amino-acid chain: Aspartate--tRNA ligase (614 aa).

L-aspartate is bound at residue E174. The segment at 198-201 is aspartate; sequence QLFK. R220 contributes to the L-aspartate binding site. ATP contacts are provided by residues 220–222 and Q229; that span reads RDE. H448 serves as a coordination point for L-aspartate. E482 lines the ATP pocket. R489 serves as a coordination point for L-aspartate. ATP is bound at residue 534–537; that stretch reads GLDR. The interval 587–614 is disordered; the sequence is YEDSVKETEQRLEKEAQEDADKNSTWDE.

It belongs to the class-II aminoacyl-tRNA synthetase family. Type 1 subfamily. In terms of assembly, homodimer.

The protein resides in the cytoplasm. The enzyme catalyses tRNA(Asp) + L-aspartate + ATP = L-aspartyl-tRNA(Asp) + AMP + diphosphate. Functionally, catalyzes the attachment of L-aspartate to tRNA(Asp) in a two-step reaction: L-aspartate is first activated by ATP to form Asp-AMP and then transferred to the acceptor end of tRNA(Asp). The chain is Aspartate--tRNA ligase from Lactobacillus johnsonii (strain CNCM I-12250 / La1 / NCC 533).